Here is a 401-residue protein sequence, read N- to C-terminus: Chalcone synthase 3 (401 aa).

Cysteine 168 is a catalytic residue.

This sequence belongs to the thiolase-like superfamily. Chalcone/stilbene synthases family.

It catalyses the reaction (E)-4-coumaroyl-CoA + 3 malonyl-CoA + 3 H(+) = 2',4,4',6'-tetrahydroxychalcone + 3 CO2 + 4 CoA. It participates in secondary metabolite biosynthesis; flavonoid biosynthesis. The primary product of this enzyme is 4,2',4',6'-tetrahydroxychalcone (also termed naringenin-chalcone or chalcone) which can under specific conditions spontaneously isomerize into naringenin. The polypeptide is Chalcone synthase 3 (CHS3) (Sorghum bicolor (Sorghum)).